The following is a 508-amino-acid chain: Photosystem II CP47 reaction center protein (508 aa).

The next 6 membrane-spanning stretches (helical) occupy residues serine 21–serine 36, isoleucine 101–tryptophan 115, glycine 140–phenylalanine 156, isoleucine 203–serine 218, valine 237–valine 252, and serine 457–arginine 472.

This sequence belongs to the PsbB/PsbC family. PsbB subfamily. In terms of assembly, PSII is composed of 1 copy each of membrane proteins PsbA, PsbB, PsbC, PsbD, PsbE, PsbF, PsbH, PsbI, PsbJ, PsbK, PsbL, PsbM, PsbT, PsbX, PsbY, PsbZ, Psb30/Ycf12, at least 3 peripheral proteins of the oxygen-evolving complex and a large number of cofactors. It forms dimeric complexes. Binds multiple chlorophylls. PSII binds additional chlorophylls, carotenoids and specific lipids. is required as a cofactor.

It is found in the plastid. The protein resides in the chloroplast thylakoid membrane. One of the components of the core complex of photosystem II (PSII). It binds chlorophyll and helps catalyze the primary light-induced photochemical processes of PSII. PSII is a light-driven water:plastoquinone oxidoreductase, using light energy to abstract electrons from H(2)O, generating O(2) and a proton gradient subsequently used for ATP formation. The polypeptide is Photosystem II CP47 reaction center protein (Phaseolus vulgaris (Kidney bean)).